The following is a 182-amino-acid chain: Peptidoglycan recognition protein (182 aa).

The first 16 residues, 1-16 (MEILFVLFFVFVTVSG), serve as a signal peptide directing secretion. 2 disulfide bridges follow: Cys-18-Cys-140 and Cys-54-Cys-60. The region spanning 39–166 (RPVELVIIQH…RQLISTESPG (128 aa)) is the N-acetylmuramoyl-L-alanine amidase domain.

Belongs to the N-acetylmuramoyl-L-alanine amidase 2 family. As to quaternary structure, monomer. As to expression, strongly expressed in fat body with weak expression observed in hemocyte. No expression detected in gut.

Functionally, binds specifically to peptidoglycan and triggers the propenoloxidase cascade which is an important insect innate immune defense mechanism. In Trichoplusia ni (Cabbage looper), this protein is Peptidoglycan recognition protein (PGRP).